Consider the following 274-residue polypeptide: 4-diphosphocytidyl-2-C-methyl-D-erythritol kinase (274 aa).

Lys8 is an active-site residue. Residue 94-104 coordinates ATP; that stretch reads PSGAGLGGGSA. The active site involves Asp136.

This sequence belongs to the GHMP kinase family. IspE subfamily.

It catalyses the reaction 4-CDP-2-C-methyl-D-erythritol + ATP = 4-CDP-2-C-methyl-D-erythritol 2-phosphate + ADP + H(+). Its pathway is isoprenoid biosynthesis; isopentenyl diphosphate biosynthesis via DXP pathway; isopentenyl diphosphate from 1-deoxy-D-xylulose 5-phosphate: step 3/6. In terms of biological role, catalyzes the phosphorylation of the position 2 hydroxy group of 4-diphosphocytidyl-2C-methyl-D-erythritol. In Bacteroides fragilis (strain ATCC 25285 / DSM 2151 / CCUG 4856 / JCM 11019 / LMG 10263 / NCTC 9343 / Onslow / VPI 2553 / EN-2), this protein is 4-diphosphocytidyl-2-C-methyl-D-erythritol kinase.